Consider the following 127-residue polypeptide: Fumarate reductase subunit C (127 aa).

3 consecutive transmembrane segments (helical) span residues 30–50 (ATVL…GSLV), 67–87 (IVVA…QTFF), and 107–127 (VVVL…LVIV).

The protein belongs to the FrdC family. In terms of assembly, part of an enzyme complex containing four subunits: a flavoprotein (FrdA), an iron-sulfur protein (FrdB), and two hydrophobic anchor proteins (FrdC and FrdD).

The protein localises to the cell inner membrane. Functionally, anchors the catalytic components of the fumarate reductase complex to the cell membrane, binds quinones. In Aliivibrio fischeri (strain ATCC 700601 / ES114) (Vibrio fischeri), this protein is Fumarate reductase subunit C.